The sequence spans 627 residues: Carene synthase 2, chloroplastic (627 aa).

The N-terminal 36 residues, 1-36 (MSVISIVPLASKSCLYKSLMSSTHELKALCRPIVTL), are a transit peptide targeting the chloroplast. Mg(2+) is bound by residues D378, D382, and D530. The short motif at 378–382 (DDMYD) is the DDXXD motif element.

It belongs to the terpene synthase family. Tpsd subfamily. Requires Mg(2+) as cofactor. Mn(2+) serves as cofactor.

It localises to the plastid. The protein resides in the chloroplast. The enzyme catalyses (2E)-geranyl diphosphate = (+)-car-3-ene + diphosphate. Its pathway is terpene metabolism; oleoresin biosynthesis. Functionally, terpene synthase (TPS) involved in defensive oleoresin formation in conifers in response to insect attack (e.g. white pine weevil P.strobi) or other injury. In Picea sitchensis (Sitka spruce), this protein is Carene synthase 2, chloroplastic (TPS-3car2).